Consider the following 576-residue polypeptide: Vacuolar protein sorting-associated protein vps5 (576 aa).

2 disordered regions span residues 1–60 and 156–198; these read MLGH…PRKR and DAAS…APQS. Position 55 is a phosphothreonine (Thr-55). Positions 156 to 169 are enriched in polar residues; it reads DAASSSAPNFTHTV. Positions 170–181 are enriched in low complexity; that stretch reads SSASSQKQGSTS. The 118-residue stretch at 200 to 317 folds into the PX domain; it reads TPFYIQVHDP…KLFLEAETFD (118 aa). 3 residues coordinate a 1,2-diacyl-sn-glycero-3-phospho-(1D-myo-inositol-3-phosphate): Arg-244, Lys-270, and Arg-284. The residue at position 332 (Ser-332) is a Phosphoserine.

Belongs to the sorting nexin family. As to quaternary structure, component of the retromer complex which consists of vps29, vps26, vps35, vps5 and vps17.

The protein localises to the cytoplasm. It localises to the golgi apparatus. It is found in the membrane. In terms of biological role, required for efficient sporulation target of PtdIns(3)P in vesicle transport required for onset of the forespore membrane formation. Functionally, plays a role in vesicular protein sorting. Required for the endosome-to-Golgi retrieval of the vacuolar protein sorting receptor pep1/vps10. Component of the membrane-associated retromer complex which is essential in endosome-to-Golgi retrograde transport. The vps29-vps26-vps35 subcomplex may be involved in cargo selection. In Schizosaccharomyces pombe (strain 972 / ATCC 24843) (Fission yeast), this protein is Vacuolar protein sorting-associated protein vps5 (vps5).